Here is a 194-residue protein sequence, read N- to C-terminus: MRLILLGPPGAGKGTQAGLLTKKHGIPQLSTGDMLRAAVAQQSEIGKRAKAVMDAGQLVSDEIVNQIVSERIDAPDCANGFILDGYPRTVPQAQALSQMLSGKGLKLDAVIELKVDENALVKRMESRVAETIAKGGQVRSDDNPEAFRKRLVEYREKTAPLSSYYAGTGELRIINGMAPVEEVTAEIERILVPA.

10–15 (GAGKGT) lines the ATP pocket. An NMP region spans residues 30–59 (STGDMLRAAVAQQSEIGKRAKAVMDAGQLV). AMP is bound by residues threonine 31, arginine 36, 57-59 (QLV), 85-88 (GYPR), and glutamine 92. The interval 126–142 (SRVAETIAKGGQVRSDD) is LID. Arginine 127 is a binding site for ATP. Residues arginine 139 and arginine 150 each coordinate AMP. Residue alanine 178 coordinates ATP.

The protein belongs to the adenylate kinase family. Monomer.

The protein resides in the cytoplasm. It catalyses the reaction AMP + ATP = 2 ADP. Its pathway is purine metabolism; AMP biosynthesis via salvage pathway; AMP from ADP: step 1/1. In terms of biological role, catalyzes the reversible transfer of the terminal phosphate group between ATP and AMP. Plays an important role in cellular energy homeostasis and in adenine nucleotide metabolism. In Brucella abortus (strain S19), this protein is Adenylate kinase.